The following is a 234-amino-acid chain: Adenylate dimethylallyltransferase (234 aa).

It belongs to the isopentenyl transferase family.

It catalyses the reaction dimethylallyl diphosphate + AMP = N(6)-(dimethylallyl)adenosine 5'-phosphate + diphosphate. Transfers dimethylallyl groups to AMP as part of the biosynthesis of cytokinin phytohormones. This chain is Adenylate dimethylallyltransferase (ptz), found in Pseudomonas savastanoi (Pseudomonas syringae pv. savastanoi).